A 104-amino-acid polypeptide reads, in one-letter code: uncharacterized protein (104 aa).

A helical transmembrane segment spans residues 72–92; it reads LIFSHNIVIIVSPIYMISFII.

The protein resides in the membrane. This is an uncharacterized protein from Saccharomyces cerevisiae (strain ATCC 204508 / S288c) (Baker's yeast).